Reading from the N-terminus, the 870-residue chain is NEDD4-like E3 ubiquitin-protein ligase WWP2 (870 aa).

The C2 domain occupies 1–117 (MASASSSRAG…KNNGGKMENT (117 aa)). The interval 150-300 (SVPNGSAVTD…QLPAAAQAPD (151 aa)) is disordered. Residues 152–171 (PNGSAVTDGSQPPSRESSGT) show a composition bias toward polar residues. Low complexity predominate over residues 198-208 (GGSARTATAAS). Ser211 carries the post-translational modification Phosphoserine. Composition is skewed to polar residues over residues 222 to 235 (VKNS…NGTV) and 262 to 289 (SVSS…TSGT). Positions 290–300 (QQLPAAAQAPD) are enriched in low complexity. WW domains lie at 300 to 333 (DALP…RPLP), 330 to 363 (RPLP…RPTA), 405 to 437 (GPLP…DPRT), and 444 to 477 (PALP…DPRP). Residues 536 to 870 (KPYDLRRRLY…IEETEGFGQE (335 aa)) enclose the HECT domain. Cys838 acts as the Glycyl thioester intermediate in catalysis.

As to quaternary structure, interacts with SCNN1A, SCNN1B, SCNN1G, WBP1, WBP2 and ATN1. Interacts with ERBB4, NDFIP1 and NDFIP2. Interacts with ARRDC4. Interacts with POU5F1, RBP1, EGR2 and SLC11A2. Interacts (via WW domains) with ARRDC1 (via PPxY motifs); ubiquitinates ARRDC1. Interacts (via WW domains) with ARRDC2 and ARRDC3. In terms of processing, autoubiquitinated. Ubiquitinated by the SCF(FBXL15) complex, leading to its degradation by the proteasome.

Its subcellular location is the nucleus. It carries out the reaction S-ubiquitinyl-[E2 ubiquitin-conjugating enzyme]-L-cysteine + [acceptor protein]-L-lysine = [E2 ubiquitin-conjugating enzyme]-L-cysteine + N(6)-ubiquitinyl-[acceptor protein]-L-lysine.. Its pathway is protein modification; protein ubiquitination. Its activity is regulated as follows. Activated by NDFIP1- and NDFIP2-binding. Functionally, E3 ubiquitin-protein ligase which accepts ubiquitin from an E2 ubiquitin-conjugating enzyme in the form of a thioester and then directly transfers the ubiquitin to targeted substrates. Polyubiquitinates POU5F1 by 'Lys-63'-linked conjugation and promotes it to proteasomal degradation; regulates POU5F1 protein level during differentiation of embryonal carcinoma cells (ECCs) but not in undifferentiated ECCs and embryonic stem cells (ESCs). Ubiquitinates EGR2 and promotes it to proteasomal degradation; in T-cells the ubiquitination inhibits activation-induced cell death. Ubiquitinates SLC11A2; the ubiquitination is enhanced by presence of NDFIP1 and NDFIP2. Ubiquitinates RPB1 and promotes it to proteasomal degradation. The sequence is that of NEDD4-like E3 ubiquitin-protein ligase WWP2 (Wwp2) from Mus musculus (Mouse).